The following is a 206-amino-acid chain: Protein tyrosine phosphatase receptor type C-associated protein (206 aa).

Residues 34–54 (VTVVLLLLLLLLLATGLALAW) form a helical membrane-spanning segment. A disordered region spans residues 98–173 (GSTDNDLERQ…PGPASAGGSA (76 aa)). Phosphoserine is present on residues Ser-99 and Ser-153. The segment covering 161–173 (LGSPGPASAGGSA) has biased composition (low complexity).

In terms of assembly, interacts with CD45/PTPRC. Phosphorylated on tyrosine residues.

The protein localises to the membrane. The polypeptide is Protein tyrosine phosphatase receptor type C-associated protein (PTPRCAP) (Homo sapiens (Human)).